The primary structure comprises 311 residues: ATP synthase subunit a (311 aa).

6 helical membrane passes run 62–82, 123–143, 170–190, 213–233, 253–273, and 276–296; these read AVHVDTLGWGIFLALLLGFIF, IAPMGLTIFSWVFMMNLMDLI, DPNATLGMAFTVFALMIMFSI, LWYLNILLIPVNTILETVALI, IFILIALLFSVGLVMGFVGGV, and WAWAVFHILVITLQAFIFMVL.

Belongs to the ATPase A chain family. F-type ATPases have 2 components, CF(1) - the catalytic core - and CF(0) - the membrane proton channel. CF(1) has five subunits: alpha(3), beta(3), gamma(1), delta(1), epsilon(1). CF(0) has three main subunits: a(1), b(2) and c(9-12). The alpha and beta chains form an alternating ring which encloses part of the gamma chain. CF(1) is attached to CF(0) by a central stalk formed by the gamma and epsilon chains, while a peripheral stalk is formed by the delta and b chains.

The protein localises to the cell inner membrane. Functionally, key component of the proton channel; it plays a direct role in the translocation of protons across the membrane. This is ATP synthase subunit a from Saccharophagus degradans (strain 2-40 / ATCC 43961 / DSM 17024).